We begin with the raw amino-acid sequence, 300 residues long: MRTDRDNWDINTSVGSTALFVAASRALEATKPAPLAADQYAEVFCRAAGGEWAELVAGGVPEHPLRSEDFGQYFVSFQGARTRYFDTYFGKAIEAGVKQVVILASGLDSRAYRLDWAPGTTVFELDQPLVHQFKREALDQHGAEPKAVRAEISVDLREDWGKALQDKGFDPSEPSAWLVEGLLIYLPADAQERLFESIDQLAAPGSFVGIEQMTTYADVVFAMLVAGANESGDQANSDFFSLIYNEQRSEAATWFRCHGWDSERTELLDYLNFSGRTLPEPSQPAWYMFNSISLVSAVKG.

Residues D126 and 155–156 (DL) each bind S-adenosyl-L-methionine.

The protein belongs to the UPF0677 family.

Its function is as follows. Exhibits S-adenosyl-L-methionine-dependent methyltransferase activity. In Mycobacteroides abscessus (strain ATCC 19977 / DSM 44196 / CCUG 20993 / CIP 104536 / JCM 13569 / NCTC 13031 / TMC 1543 / L948) (Mycobacterium abscessus), this protein is Putative S-adenosyl-L-methionine-dependent methyltransferase MAB_4328c.